The sequence spans 249 residues: Imidazole glycerol phosphate synthase subunit HisF (249 aa).

Catalysis depends on residues aspartate 11 and aspartate 130.

The protein belongs to the HisA/HisF family. Heterodimer of HisH and HisF.

The protein localises to the cytoplasm. The catalysed reaction is 5-[(5-phospho-1-deoxy-D-ribulos-1-ylimino)methylamino]-1-(5-phospho-beta-D-ribosyl)imidazole-4-carboxamide + L-glutamine = D-erythro-1-(imidazol-4-yl)glycerol 3-phosphate + 5-amino-1-(5-phospho-beta-D-ribosyl)imidazole-4-carboxamide + L-glutamate + H(+). It participates in amino-acid biosynthesis; L-histidine biosynthesis; L-histidine from 5-phospho-alpha-D-ribose 1-diphosphate: step 5/9. Its function is as follows. IGPS catalyzes the conversion of PRFAR and glutamine to IGP, AICAR and glutamate. The HisF subunit catalyzes the cyclization activity that produces IGP and AICAR from PRFAR using the ammonia provided by the HisH subunit. This is Imidazole glycerol phosphate synthase subunit HisF from Exiguobacterium sibiricum (strain DSM 17290 / CCUG 55495 / CIP 109462 / JCM 13490 / 255-15).